A 176-amino-acid chain; its full sequence is Isopentenyl-diphosphate Delta-isomerase (176 aa).

Mn(2+) contacts are provided by His22 and His28. A Nudix hydrolase domain is found at 26 to 160 (LRHKAISVFI…PETFTPWLHI (135 aa)). Cys62 is a catalytic residue. Position 64 (His64) interacts with Mn(2+). Glu82 contributes to the Mg(2+) binding site. The Mn(2+) site is built by Glu108 and Glu110. The active site involves Glu110.

The protein belongs to the IPP isomerase type 1 family. Requires Mg(2+) as cofactor. It depends on Mn(2+) as a cofactor.

It localises to the cytoplasm. It carries out the reaction isopentenyl diphosphate = dimethylallyl diphosphate. It participates in isoprenoid biosynthesis; dimethylallyl diphosphate biosynthesis; dimethylallyl diphosphate from isopentenyl diphosphate: step 1/1. The protein operates within porphyrin-containing compound metabolism; chlorophyll biosynthesis. Functionally, catalyzes the 1,3-allylic rearrangement of the homoallylic substrate isopentenyl (IPP) to its highly electrophilic allylic isomer, dimethylallyl diphosphate (DMAPP). This is Isopentenyl-diphosphate Delta-isomerase from Jannaschia sp. (strain CCS1).